Here is a 279-residue protein sequence, read N- to C-terminus: MNTENKEITSNWFTNLRDLLCKEFEKIEEKYAQIKGLKPAKFVRTSWKRNGGGCGIMSLMKGEVFEKVGVNISTVFGEFSQEFRSEILGAELDGKFFATGISVVAHLKSPLIPAMHFNTRYIETSKNWFGGGSDLTPFYPEENETAKFHTAFKEACDKYDSSYYPKFKRQCDEYFYLRHRKEPRGVGGIFYDYLNSGNFEQDFAFTRDIGKALLSVYPEIVRSKLFLPWTDEQKEYQLIKRGRYVEFNLLYDRGTKFGLMTDGNIEAILMSLPPVVKFN.

Ser-102 contacts substrate. Positions 106 and 116 each coordinate a divalent metal cation. Catalysis depends on His-116, which acts as the Proton donor. 118–120 (NTR) serves as a coordination point for substrate. Positions 149 and 179 each coordinate a divalent metal cation. The important for dimerization stretch occupies residues 244 to 279 (YVEFNLLYDRGTKFGLMTDGNIEAILMSLPPVVKFN).

It belongs to the aerobic coproporphyrinogen-III oxidase family. Homodimer. A divalent metal cation serves as cofactor.

The protein localises to the cytoplasm. The enzyme catalyses coproporphyrinogen III + O2 + 2 H(+) = protoporphyrinogen IX + 2 CO2 + 2 H2O. It functions in the pathway porphyrin-containing compound metabolism; protoporphyrin-IX biosynthesis; protoporphyrinogen-IX from coproporphyrinogen-III (O2 route): step 1/1. In terms of biological role, involved in the heme biosynthesis. Catalyzes the aerobic oxidative decarboxylation of propionate groups of rings A and B of coproporphyrinogen-III to yield the vinyl groups in protoporphyrinogen-IX. The sequence is that of Oxygen-dependent coproporphyrinogen-III oxidase from Rickettsia typhi (strain ATCC VR-144 / Wilmington).